The primary structure comprises 102 residues: Putative lipid-transfer protein DIR1 (102 aa).

An N-terminal signal peptide occupies residues Met-1–Val-25. Cystine bridges form between Cys-30–Cys-67, Cys-40–Cys-56, Cys-57–Cys-94, and Cys-69–Cys-102. Gln-34 lines the a 1-acyl-sn-glycero-3-phosphocholine pocket. Glu-36 serves as a coordination point for Zn(2+). Asn-38 is an a 1-acyl-sn-glycero-3-phosphocholine binding site. His-62 is a binding site for Zn(2+).

It belongs to the A9/FIL1 family. Self-interacts and binds to AZI1. Does not interact with PDLP1. It depends on Zn(2+) as a cofactor.

The protein localises to the secreted. The protein resides in the extracellular space. Its subcellular location is the apoplast. It is found in the endoplasmic reticulum. It localises to the cell junction. The protein localises to the plasmodesma. Functionally, putative lipid transfer protein required for systemic acquired resistance (SAR) long distance signaling. May interact with a lipid-derived molecule to promote long distance signaling associated with SAR. Together with AZI1, required for glycerol-3-phosphate- (G3P) and azelaic acid- (AA) induced systemic acquired resistance (SAR). Component of plant systemic immunity involved in priming defenses in a AA-dependent manner, by modulating production and/or translocation of a mobile signal(s) during SAR. Is able to bind with high affinity monoacylated phospholipids, mainly lysophosphatidylcholines. In Arabidopsis thaliana (Mouse-ear cress), this protein is Putative lipid-transfer protein DIR1 (DIR1).